Consider the following 135-residue polypeptide: Small ribosomal subunit protein uS8 (135 aa).

It belongs to the universal ribosomal protein uS8 family. In terms of assembly, part of the 30S ribosomal subunit. Contacts proteins S5 and S12.

In terms of biological role, one of the primary rRNA binding proteins, it binds directly to 16S rRNA central domain where it helps coordinate assembly of the platform of the 30S subunit. This Salinispora arenicola (strain CNS-205) protein is Small ribosomal subunit protein uS8.